A 239-amino-acid polypeptide reads, in one-letter code: Sugar fermentation stimulation protein homolog (239 aa).

This sequence belongs to the SfsA family.

The chain is Sugar fermentation stimulation protein homolog from Cyanothece sp. (strain PCC 7425 / ATCC 29141).